Here is a 598-residue protein sequence, read N- to C-terminus: MPCIQAQYGTPAPSPGPRDHLASDPLTPELSKPTMDLASPEAAPTAPTALPSFSTFMDGYTGEFDTFLYQLPGTAQPCSSASSSASSTSSSSATSPASASFKFEDFQVYGCYPGPLSGPLDETLSSSGSDYYGSPCSAPSPSTPSFQPPQLSPWDGSFGPFSPSQTYEGLRAWTEQLPKASGHPQPPAFFSFSPPTGPSPSLAQSPLKLFPSQATCQLGERESYSISTAFPGLAPTSPHLDGPGMLDAPVPSAKARSGAPSGSEGRCAVCGDNASCQHYGVRTCEGCKGFFKRTVQKNAKYICLANKDCPVDKRRRNRCQFCRFQKCLAVGMVKEVVRTDSLKGRRGRLPSKPKQPPDASPANLLTSLVRAHLDSGPSTAKLDYSKFQELVLPHFGKEDAGDVQQFYDLLSGSLEVIRKWAEKIPGFAELSPGDQDLLLESAFLELFILRLAYRSKPAEGKLIFCSGLVLHRLQCARGFGDWIDSILAFSRSLHGLVVDVPAFACLSALVLITDRHGLQEPRRVEELQNRIASCLKEHVSAVAGEPQPASCLSRLLGKLPELRTLCTQGLQRIFYLKLEDLVPPPPIVDKIFMDTLPF.

2 disordered regions span residues 1–50 (MPCI…PTAL) and 120–159 (LDET…GSFG). Low complexity-rich tracts occupy residues 37 to 50 (LASP…PTAL) and 134 to 145 (SPCSAPSPSTPS). Positions 171–466 (RAWTEQLPKA…PAEGKLIFCS (296 aa)) are required for nuclear import. Positions 264–339 (EGRCAVCGDN…VGMVKEVVRT (76 aa)) form a DNA-binding region, nuclear receptor. NR C4-type zinc fingers lie at residues 267-287 (CAVC…CEGC) and 303-327 (CLAN…FQKC). The segment at 268-354 (AVCGDNASCQ…RRGRLPSKPK (87 aa)) is required for binding NBRE-containing DNA. The interval 299-361 (AKYICLANKD…KPKQPPDASP (63 aa)) is required for the interaction with RXRA. Serine 341 carries the post-translational modification Phosphoserine; by PKA. Positions 341–361 (SLKGRRGRLPSKPKQPPDASP) are disordered. Serine 351 bears the Phosphoserine; by PKA, RPS6KA1 and RPS6KA3 mark. The 236-residue stretch at 360-595 (SPANLLTSLV…PIVDKIFMDT (236 aa)) folds into the NR LBD domain. Positions 521–544 (PRRVEELQNRIASCLKEHVSAVAG) are binds lipopolysaccharide. Residues 584–595 (PPPIVDKIFMDT) form an AF-2 region.

This sequence belongs to the nuclear hormone receptor family. NR4 subfamily. In terms of assembly, binds the NGFI-B response element (NBRE) as a monomer. Binds the Nur response element (NurRE), consisting of two inverse NBRE-related octanucleotide repeats separated by 6 base-pairs, as a dimer. Interacts (via N-terminus) with NLRP3 (via LRR repeat domain); the interaction is direct, requires binding of NR4A1/Nur77 to NBRE-containing dsDNA and lipopolysaccharide, and leads to non-canonical NLRP3 inflammasome activation. Interacts with GADD45GIP1. Interacts with STK11. Heterodimer (via DNA-binding domain) with RXRA (via C-terminus); DNA-binding of the heterodimer is enhanced by 9-cis retinoic acid. Competes for the RXRA interaction with EP300 and thereby attenuates EP300 mediated acetylation of RXRA. Interacts with NCOA1. Interacts with NCOA2. Interacts with NCOA3. The cofactor is Zn(2+). Post-translationally, phosphorylated at Ser-351 by RPS6KA1 and RPS6KA3 in response to mitogenic or stress stimuli. In terms of processing, acetylated by p300/CBP, acetylation increases stability. Deacetylated by HDAC1.

It is found in the cytoplasm. Its subcellular location is the cytosol. The protein localises to the nucleus. It localises to the mitochondrion. In terms of biological role, orphan nuclear receptor. Binds the NGFI-B response element (NBRE) 5'-AAAGGTCA-3'. Binds 9-cis-retinoic acid outside of its ligand-binding (NR LBD) domain. Participates in energy homeostasis by sequestrating the kinase STK11 in the nucleus, thereby attenuating cytoplasmic AMPK activation. Regulates the inflammatory response in macrophages by regulating metabolic adaptations during inflammation, including repressing the transcription of genes involved in the citric acid cycle (TCA). Inhibits NF-kappa-B signaling by binding to low-affinity NF-kappa-B binding sites, such as at the IL2 promoter. May act concomitantly with NR4A2 in regulating the expression of delayed-early genes during liver regeneration. Plays a role in the vascular response to injury. In the cytosol, upon its detection of both bacterial lipopolysaccharide (LPS) and NBRE-containing mitochondrial DNA released by GSDMD pores during pyroptosis, it promotes non-canonical NLRP3 inflammasome activation by stimulating association of NLRP3 and NEK7. The polypeptide is Nuclear receptor subfamily 4 group A member 1 (NR4A1) (Canis lupus familiaris (Dog)).